The following is a 1405-amino-acid chain: DNA-directed RNA polymerase subunit beta' (1405 aa).

Residues cysteine 70, cysteine 72, cysteine 85, and cysteine 88 each coordinate Zn(2+). The Mg(2+) site is built by aspartate 460, aspartate 462, and aspartate 464. Positions 814, 888, 895, and 898 each coordinate Zn(2+).

The protein belongs to the RNA polymerase beta' chain family. As to quaternary structure, the RNAP catalytic core consists of 2 alpha, 1 beta, 1 beta' and 1 omega subunit. When a sigma factor is associated with the core the holoenzyme is formed, which can initiate transcription. Mg(2+) serves as cofactor. The cofactor is Zn(2+).

It catalyses the reaction RNA(n) + a ribonucleoside 5'-triphosphate = RNA(n+1) + diphosphate. DNA-dependent RNA polymerase catalyzes the transcription of DNA into RNA using the four ribonucleoside triphosphates as substrates. The chain is DNA-directed RNA polymerase subunit beta' from Wigglesworthia glossinidia brevipalpis.